Consider the following 202-residue polypeptide: Xanthine phosphoribosyltransferase (202 aa).

Leu-20 and Asn-27 together coordinate xanthine. 5-phospho-alpha-D-ribose 1-diphosphate is bound at residue 128 to 132 (ANGEA). Lys-156 contacts xanthine.

This sequence belongs to the purine/pyrimidine phosphoribosyltransferase family. Xpt subfamily. As to quaternary structure, homodimer.

Its subcellular location is the cytoplasm. The catalysed reaction is XMP + diphosphate = xanthine + 5-phospho-alpha-D-ribose 1-diphosphate. It functions in the pathway purine metabolism; XMP biosynthesis via salvage pathway; XMP from xanthine: step 1/1. Its function is as follows. Converts the preformed base xanthine, a product of nucleic acid breakdown, to xanthosine 5'-monophosphate (XMP), so it can be reused for RNA or DNA synthesis. This is Xanthine phosphoribosyltransferase from Alkaliphilus metalliredigens (strain QYMF).